We begin with the raw amino-acid sequence, 546 residues long: Chaperonin GroEL 2 (546 aa).

ATP contacts are provided by residues 30–33 (TLGP), K51, 87–91 (DGTTT), G415, 479–481 (NAA), and D495.

The protein belongs to the chaperonin (HSP60) family. Forms a cylinder of 14 subunits composed of two heptameric rings stacked back-to-back. Interacts with the co-chaperonin GroES.

The protein localises to the cytoplasm. The enzyme catalyses ATP + H2O + a folded polypeptide = ADP + phosphate + an unfolded polypeptide.. Together with its co-chaperonin GroES, plays an essential role in assisting protein folding. The GroEL-GroES system forms a nano-cage that allows encapsulation of the non-native substrate proteins and provides a physical environment optimized to promote and accelerate protein folding. In Chromobacterium violaceum (strain ATCC 12472 / DSM 30191 / JCM 1249 / CCUG 213 / NBRC 12614 / NCIMB 9131 / NCTC 9757 / MK), this protein is Chaperonin GroEL 2.